Here is a 155-residue protein sequence, read N- to C-terminus: Myosin light chain alkali (155 aa).

EF-hand domains lie at 7 to 41 (REIE…LNLN) and 80 to 115 (GCYE…LGES).

In terms of assembly, myosin is a hexamer of 2 heavy chains and 4 light chains.

The chain is Myosin light chain alkali (Mlc1) from Drosophila pseudoobscura pseudoobscura (Fruit fly).